Reading from the N-terminus, the 120-residue chain is Large ribosomal subunit protein uL18 (120 aa).

This sequence belongs to the universal ribosomal protein uL18 family. In terms of assembly, part of the 50S ribosomal subunit; part of the 5S rRNA/L5/L18/L25 subcomplex. Contacts the 5S and 23S rRNAs.

This is one of the proteins that bind and probably mediate the attachment of the 5S RNA into the large ribosomal subunit, where it forms part of the central protuberance. The protein is Large ribosomal subunit protein uL18 of Exiguobacterium sp. (strain ATCC BAA-1283 / AT1b).